Reading from the N-terminus, the 62-residue chain is MSKCYITGKTTLFGNRRSHAMNATKRIWKANLQNVKIIDENGKIQKVKISARALKKLKLQRA.

This sequence belongs to the bacterial ribosomal protein bL28 family.

The polypeptide is Large ribosomal subunit protein bL28 (Aster yellows witches'-broom phytoplasma (strain AYWB)).